Reading from the N-terminus, the 414-residue chain is Putative competence-damage inducible protein (414 aa).

This sequence belongs to the CinA family.

The protein is Putative competence-damage inducible protein of Listeria monocytogenes serovar 1/2a (strain ATCC BAA-679 / EGD-e).